The chain runs to 510 residues: ATP synthase subunit alpha (510 aa).

An ATP-binding site is contributed by 170–177 (GDRQTGKT).

It belongs to the ATPase alpha/beta chains family. F-type ATPases have 2 components, CF(1) - the catalytic core - and CF(0) - the membrane proton channel. CF(1) has five subunits: alpha(3), beta(3), gamma(1), delta(1), epsilon(1). CF(0) has three main subunits: a(1), b(2) and c(9-12). The alpha and beta chains form an alternating ring which encloses part of the gamma chain. CF(1) is attached to CF(0) by a central stalk formed by the gamma and epsilon chains, while a peripheral stalk is formed by the delta and b chains.

The protein resides in the cell inner membrane. The enzyme catalyses ATP + H2O + 4 H(+)(in) = ADP + phosphate + 5 H(+)(out). Its function is as follows. Produces ATP from ADP in the presence of a proton gradient across the membrane. The alpha chain is a regulatory subunit. This chain is ATP synthase subunit alpha, found in Dictyoglomus thermophilum (strain ATCC 35947 / DSM 3960 / H-6-12).